Consider the following 585-residue polypeptide: Aspartate--tRNA ligase (585 aa).

An L-aspartate-binding site is contributed by glutamate 171. An aspartate region spans residues glutamine 195 to lysine 198. Arginine 217 is an L-aspartate binding site. Residues arginine 217–glutamate 219 and glutamine 226 each bind ATP. Histidine 448 contacts L-aspartate. Residue glutamate 482 participates in ATP binding. L-aspartate is bound at residue arginine 489. Glycine 534–arginine 537 contributes to the ATP binding site.

This sequence belongs to the class-II aminoacyl-tRNA synthetase family. Type 1 subfamily. As to quaternary structure, homodimer.

Its subcellular location is the cytoplasm. It catalyses the reaction tRNA(Asp) + L-aspartate + ATP = L-aspartyl-tRNA(Asp) + AMP + diphosphate. Catalyzes the attachment of L-aspartate to tRNA(Asp) in a two-step reaction: L-aspartate is first activated by ATP to form Asp-AMP and then transferred to the acceptor end of tRNA(Asp). The chain is Aspartate--tRNA ligase from Histophilus somni (strain 129Pt) (Haemophilus somnus).